The chain runs to 209 residues: Large ribosomal subunit protein bL25 (209 aa).

The tract at residues 190-209 (PDASAAPVAAPAAPAKKGKK) is disordered.

This sequence belongs to the bacterial ribosomal protein bL25 family. CTC subfamily. In terms of assembly, part of the 50S ribosomal subunit; part of the 5S rRNA/L5/L18/L25 subcomplex. Contacts the 5S rRNA. Binds to the 5S rRNA independently of L5 and L18.

This is one of the proteins that binds to the 5S RNA in the ribosome where it forms part of the central protuberance. This Delftia acidovorans (strain DSM 14801 / SPH-1) protein is Large ribosomal subunit protein bL25.